Here is a 308-residue protein sequence, read N- to C-terminus: RNA pseudouridylate synthase domain-containing protein 1 (308 aa).

Met-1 carries the post-translational modification N-acetylmethionine. The active site involves Asp-67. A disordered region spans residues 257–292; the sequence is APDPDPSEGGPGPCSPCTPLPGPGRPPPPPETEVQR. Positions 269 to 287 are enriched in pro residues; the sequence is PCSPCTPLPGPGRPPPPPE.

The protein belongs to the pseudouridine synthase RluA family.

The chain is RNA pseudouridylate synthase domain-containing protein 1 (RPUSD1) from Bos taurus (Bovine).